The primary structure comprises 925 residues: TBC1 domain family member 2A (925 aa).

N-acetylmethionine is present on methionine 1. Residues 1–41 are disordered; the sequence is MEGAQESPAESGSSVPWSEEPAGSAKVPEVSLSEESEGCTR. The segment at 1 to 171 is interaction with CADH1; sequence MEGAQESPAE…AGNGPALRLE (171 aa). The 98-residue stretch at 47–144 folds into the PH domain; that stretch reads PPKLCGYLSK…WLQQLQMKRW (98 aa). The disordered stretch occupies residues 231–278; sequence NKQTQGANHRPPGEDSPLIEETQREEQPSPPGPGAPGKDPANSLKSSL. The tract at residues 297–435 is interaction with RAC1; sequence SEGLMRNRTA…KVTQDFMKAP (139 aa). The stretch at 302-475 forms a coiled coil; the sequence is RNRTAQEKVL…LNSEIHQVTK (174 aa). The Rab-GAP TBC domain occupies 622-814; it reads GVPHEHRPRV…QVWDAFLYEG (193 aa). Positions 872 to 907 form a coiled coil; sequence MKQLRQLRAAHRERLEAELNELEQLKAEYLETRAAQ. Positions 904 to 925 are disordered; it reads RAAQGPAVPEGSPSEDEGEAEP. Residues 916-925 are compositionally biased toward acidic residues; it reads PSEDEGEAEP. Serine 917 is modified (phosphoserine).

In terms of assembly, interacts with activated RAC1 and CDH1.

It localises to the cytoplasm. The protein localises to the cytoplasmic vesicle. Its subcellular location is the cell junction. Its function is as follows. May act as a GTPase-activating protein for Rab family protein(s). Signal effector acting as a linker between RAC1 and RAB7A, leading to RAB7A inactivation and further inhibition of cadherin degradation. The chain is TBC1 domain family member 2A (TBC1D2) from Bos taurus (Bovine).